Reading from the N-terminus, the 203-residue chain is ATP-dependent Clp protease proteolytic subunit (203 aa).

Catalysis depends on serine 107, which acts as the Nucleophile. Histidine 132 is a catalytic residue.

The protein belongs to the peptidase S14 family. Fourteen ClpP subunits assemble into 2 heptameric rings which stack back to back to give a disk-like structure with a central cavity, resembling the structure of eukaryotic proteasomes.

Its subcellular location is the cytoplasm. It catalyses the reaction Hydrolysis of proteins to small peptides in the presence of ATP and magnesium. alpha-casein is the usual test substrate. In the absence of ATP, only oligopeptides shorter than five residues are hydrolyzed (such as succinyl-Leu-Tyr-|-NHMec, and Leu-Tyr-Leu-|-Tyr-Trp, in which cleavage of the -Tyr-|-Leu- and -Tyr-|-Trp bonds also occurs).. Functionally, cleaves peptides in various proteins in a process that requires ATP hydrolysis. Has a chymotrypsin-like activity. Plays a major role in the degradation of misfolded proteins. The protein is ATP-dependent Clp protease proteolytic subunit of Shewanella halifaxensis (strain HAW-EB4).